The chain runs to 405 residues: CMP-sialic acid transporter 4 (405 aa).

Topologically, residues 1–43 (MQRNGVMECSVCHSKVVAPSPRSVSRAYDKHRSKISSKYRALN) are cytoplasmic. Residues 44–64 (FLLVSGDCILVGLQPILVFMS) form a helical membrane-spanning segment. At 65–74 (KVDGKFQFSP) the chain is on the lumenal side. The chain crosses the membrane as a helical span at residues 75–95 (ISVNFLTEVTKVIFAIVMLII). Over 96–121 (QSRKQKVGEKPLLSLSTFVQAARNNA) the chain is Cytoplasmic. Residues 122-142 (LLAVPALLYAINNYLKFIMQL) form a helical membrane-spanning segment. Y143 is a topological domain (lumenal). Residues 144–164 (FSPATVKMLSNLKVLVIAILL) traverse the membrane as a helical segment. At 165-171 (KFIMRRK) the chain is on the cytoplasmic side. A helical transmembrane segment spans residues 172–192 (FSIIQWEALALLLIGISVNQL). Residues 193–203 (SSIPDGTKSFG) are Lumenal-facing. A helical membrane pass occupies residues 204–224 (LAVTTIAYIYTLIFVTVPSLA). The Cytoplasmic portion of the chain corresponds to 225-244 (SVYNEYALKSQFDTSIYLQN). The helical transmembrane segment at 245–265 (LFLYGYGAIFNFLGILGTVIF) threads the bilayer. Over 266 to 281 (QGPESFDILRGHSRAT) the chain is Lumenal. The helical transmembrane segment at 282–302 (MFLICNNAAQGILSSFFFKYA) threads the bilayer. The Cytoplasmic portion of the chain corresponds to 303–322 (DTILKKYSSTVATIFTGLAS). The helical transmembrane segment at 323–343 (AAFLGHTLTVNFLLGISIVFI) threads the bilayer. Topologically, residues 344–405 (SMHQFFSPLA…TDERKPLLPI (62 aa)) are lumenal.

This sequence belongs to the nucleotide-sugar transporter family. CMP-Sialate:CMP antiporter (TC 2.A.7.12) subfamily.

It is found in the golgi apparatus membrane. Sugar transporter involved in the transport of CMP-sialic acid from the cytoplasm into the Golgi. May transport important nucleotide sugars such as CMP-Kdo (2-keto-3-deoxy-D-manno-octulosonic acid) in physiological conditions. The polypeptide is CMP-sialic acid transporter 4 (Oryza sativa subsp. japonica (Rice)).